The primary structure comprises 175 residues: Cuticle protein 16.5, isoform B (175 aa).

19 repeat units span residues 17–20 (AAPA), 25–28 (AAPA), 31–34 (AAPA), 38–41 (AAPA), 44–47 (AAPA), 51–54 (AAPA), 57–60 (AAPA), 64–67 (AAPA), 70–73 (AAPA), 77–80 (AAPA), 83–86 (AAPA), 91–94 (AAPA), 99–102 (AAPA), 106–109 (AAPA), 134–137 (AAPA), 144–147 (AAPA), 151–154 (AAPA), 158–161 (AAPA), and 165–168 (AAPA).

In terms of biological role, component of the cuticle of migratory locust which contains more than 100 different structural proteins. This Locusta migratoria (Migratory locust) protein is Cuticle protein 16.5, isoform B.